The following is a 398-amino-acid chain: Acetate kinase (398 aa).

N8 lines the Mg(2+) pocket. An ATP-binding site is contributed by K15. Position 89 (R89) interacts with substrate. D146 serves as the catalytic Proton donor/acceptor. Residues 206–210, 283–285, and 331–335 each bind ATP; these read HIGNG, DMR, and GMGEN. E383 is a binding site for Mg(2+).

It belongs to the acetokinase family. Homodimer. It depends on Mg(2+) as a cofactor. Requires Mn(2+) as cofactor.

The protein resides in the cytoplasm. It catalyses the reaction acetate + ATP = acetyl phosphate + ADP. It functions in the pathway metabolic intermediate biosynthesis; acetyl-CoA biosynthesis; acetyl-CoA from acetate: step 1/2. In terms of biological role, catalyzes the formation of acetyl phosphate from acetate and ATP. Can also catalyze the reverse reaction. This is Acetate kinase from Streptococcus pyogenes serotype M49 (strain NZ131).